We begin with the raw amino-acid sequence, 129 residues long: Glycine cleavage system H protein 2 (129 aa).

In terms of domain architecture, Lipoyl-binding spans 24–105; that stretch reads SVTVGISDHA…PYVSWFFKLK (82 aa). Position 65 is an N6-lipoyllysine (lysine 65).

The protein belongs to the GcvH family. In terms of assembly, the glycine cleavage system is composed of four proteins: P, T, L and H. (R)-lipoate is required as a cofactor.

The glycine cleavage system catalyzes the degradation of glycine. The H protein shuttles the methylamine group of glycine from the P protein to the T protein. In Pseudomonas aeruginosa (strain ATCC 15692 / DSM 22644 / CIP 104116 / JCM 14847 / LMG 12228 / 1C / PRS 101 / PAO1), this protein is Glycine cleavage system H protein 2.